Here is a 539-residue protein sequence, read N- to C-terminus: Glucans biosynthesis protein D (539 aa).

Residues 1 to 29 (MNRRNLLKASMALAAYGSVSASGLYAARA) constitute a signal peptide (tat-type signal).

It belongs to the OpgD/OpgG family. In terms of processing, predicted to be exported by the Tat system. The position of the signal peptide cleavage has not been experimentally proven.

The protein localises to the periplasm. It participates in glycan metabolism; osmoregulated periplasmic glucan (OPG) biosynthesis. In terms of biological role, probably involved in the control of the structural glucose backbone of osmoregulated periplasmic glucans (OPGs). The polypeptide is Glucans biosynthesis protein D (Pseudomonas savastanoi pv. phaseolicola (strain 1448A / Race 6) (Pseudomonas syringae pv. phaseolicola (strain 1448A / Race 6))).